The following is a 502-amino-acid chain: Probable cytosol aminopeptidase (502 aa).

Mn(2+) contacts are provided by Lys269 and Asp274. The active site involves Lys281. 3 residues coordinate Mn(2+): Asp292, Asp351, and Glu353. Arg355 is an active-site residue.

This sequence belongs to the peptidase M17 family. The cofactor is Mn(2+).

Its subcellular location is the cytoplasm. The enzyme catalyses Release of an N-terminal amino acid, Xaa-|-Yaa-, in which Xaa is preferably Leu, but may be other amino acids including Pro although not Arg or Lys, and Yaa may be Pro. Amino acid amides and methyl esters are also readily hydrolyzed, but rates on arylamides are exceedingly low.. It carries out the reaction Release of an N-terminal amino acid, preferentially leucine, but not glutamic or aspartic acids.. Its function is as follows. Presumably involved in the processing and regular turnover of intracellular proteins. Catalyzes the removal of unsubstituted N-terminal amino acids from various peptides. This Photobacterium profundum (strain SS9) protein is Probable cytosol aminopeptidase.